The chain runs to 225 residues: Protein LiaH (225 aa).

Coiled coils occupy residues 58–151 (KKYE…KEHM) and 161–182 (ESAY…IRAN).

This sequence belongs to the PspA/Vipp/IM30 family.

The chain is Protein LiaH (liaH) from Bacillus subtilis (strain 168).